Reading from the N-terminus, the 88-residue chain is Small ribosomal subunit protein bS20 (88 aa).

Disordered regions lie at residues 1–25 (MPNI…KAVK) and 68–88 (HKNQ…SLAA).

It belongs to the bacterial ribosomal protein bS20 family.

Functionally, binds directly to 16S ribosomal RNA. This Cutibacterium acnes (strain DSM 16379 / KPA171202) (Propionibacterium acnes) protein is Small ribosomal subunit protein bS20.